The chain runs to 190 residues: MKGTPSSLDTLMWIYHFHSSTEVALQPPLLSSLELSVAAAHEYLEQRFRELKSLEPPEPKMQGMLPAPKPTLGLVLREATASLVSFGTTLLEISALWLQQEARRLDGSAGPAPDGRDPGAALSRVAQAAGQGVRQAGAAVGASARLLVQGAWLCLCGRGLQGSASFLRQSQQQLGLGIPGEPVSSGHGVS.

This is an uncharacterized protein from Homo sapiens (Human).